The following is a 100-amino-acid chain: Integration host factor subunit alpha (100 aa).

The interval 53–72 is disordered; that stretch reads FDLRDKRQRPGRNPKTGEEI.

The protein belongs to the bacterial histone-like protein family. In terms of assembly, heterodimer of an alpha and a beta chain.

Functionally, this protein is one of the two subunits of integration host factor, a specific DNA-binding protein that functions in genetic recombination as well as in transcriptional and translational control. In Pseudomonas entomophila (strain L48), this protein is Integration host factor subunit alpha.